The sequence spans 103 residues: Histone H4 (103 aa).

Residues 1–14 (MTGRGKGGKGLGKG) are compositionally biased toward gly residues. The interval 1–20 (MTGRGKGGKGLGKGGAKRHR) is disordered. Lys-6 carries the post-translational modification N6-acetyl-N6-methyllysine; alternate. N6-methyllysine; alternate is present on residues Lys-6, Lys-9, and Lys-13. Lys-13 is subject to N6-acetyl-N6-methyllysine; alternate. The DNA-binding element occupies 17 to 21 (KRHRK). Lys-92 carries the post-translational modification N6-glutaryllysine.

It belongs to the histone H4 family. As to quaternary structure, the nucleosome is a histone octamer containing two molecules each of H2A, H2B, H3 and H4 assembled in one H3-H4 heterotetramer and two H2A-H2B heterodimers. The octamer wraps approximately 147 bp of DNA. In terms of processing, glutarylation at Lys-92 (H4K91glu) destabilizes nucleosomes by promoting dissociation of the H2A-H2B dimers from nucleosomes.

Its subcellular location is the nucleus. The protein localises to the chromosome. Functionally, core component of nucleosome. Nucleosomes wrap and compact DNA into chromatin, limiting DNA accessibility to the cellular machineries which require DNA as a template. Histones thereby play a central role in transcription regulation, DNA repair, DNA replication and chromosomal stability. DNA accessibility is regulated via a complex set of post-translational modifications of histones, also called histone code, and nucleosome remodeling. In Neurospora crassa (strain ATCC 24698 / 74-OR23-1A / CBS 708.71 / DSM 1257 / FGSC 987), this protein is Histone H4 (hH4-1).